Consider the following 448-residue polypeptide: Signal recognition particle protein (448 aa).

GTP contacts are provided by residues Gly101–Thr108, Asp182–Arg186, and Ser240–Asp243.

It belongs to the GTP-binding SRP family. SRP54 subfamily. Part of the signal recognition particle protein translocation system, which is composed of SRP and FtsY. SRP is a ribonucleoprotein composed of Ffh and a 4.5S RNA molecule.

The protein resides in the cytoplasm. The enzyme catalyses GTP + H2O = GDP + phosphate + H(+). Its function is as follows. Involved in targeting and insertion of nascent membrane proteins into the cytoplasmic membrane. Binds to the hydrophobic signal sequence of the ribosome-nascent chain (RNC) as it emerges from the ribosomes. The SRP-RNC complex is then targeted to the cytoplasmic membrane where it interacts with the SRP receptor FtsY. Interaction with FtsY leads to the transfer of the RNC complex to the Sec translocase for insertion into the membrane, the hydrolysis of GTP by both Ffh and FtsY, and the dissociation of the SRP-FtsY complex into the individual components. The polypeptide is Signal recognition particle protein (Helicobacter pylori (strain ATCC 700392 / 26695) (Campylobacter pylori)).